Consider the following 127-residue polypeptide: Large ribosomal subunit protein bL12 (127 aa).

The protein belongs to the bacterial ribosomal protein bL12 family. In terms of assembly, homodimer. Part of the ribosomal stalk of the 50S ribosomal subunit. Forms a multimeric L10(L12)X complex, where L10 forms an elongated spine to which 2 to 4 L12 dimers bind in a sequential fashion. Binds GTP-bound translation factors.

Forms part of the ribosomal stalk which helps the ribosome interact with GTP-bound translation factors. Is thus essential for accurate translation. The protein is Large ribosomal subunit protein bL12 of Clavibacter michiganensis subsp. michiganensis (strain NCPPB 382).